A 736-amino-acid polypeptide reads, in one-letter code: Capsid protein (736 aa).

Residues 633-692 form a disordered region; the sequence is ESDALTLSPVHRPKRPKRDTQVKEKTPEKDSDSAVQLRRLQPWIHSSQETKDEEEEIPEG. Positions 650-664 are enriched in basic and acidic residues; that stretch reads RDTQVKEKTPEKDSD.

This sequence belongs to the anelloviridae capsid protein family.

The protein localises to the virion. Its function is as follows. Self assemble to form an icosahedral capsid. In Torque teno virus (isolate Human/Finland/Hel32/2002) (TTV), this protein is Capsid protein.